We begin with the raw amino-acid sequence, 471 residues long: Plasmepsin VII (471 aa).

The N-terminal stretch at 1–24 is a signal peptide; the sequence is MKSVYHHFAIIFFLKLFLCNCILS. The region spanning 96 to 438 is the Peptidase A1 domain; sequence YYGKIAIGEN…DKDNLQIGFV (343 aa). Catalysis depends on residues D115 and D325.

It belongs to the peptidase A1 family.

Its subcellular location is the cytoplasm. In Plasmodium berghei (strain Anka), this protein is Plasmepsin VII.